Reading from the N-terminus, the 169-residue chain is Centrosomal protein 20 (169 aa).

The tract at residues 1–104 (MATVGDLKAV…VVEDLNSQSV (104 aa)) is necessary and sufficient for homooligomerization and localization to centrosomes and pericentriolar satellites. Residues 49 to 81 (ENLLINELIREYLAFNKYSYTSSVLTAETGLSE) enclose the LisH domain. The tract at residues 135–169 (TFRNIPRGRNTKDTHSGPVQLTQTSTEDWHQRRHR) is disordered. Residues 151-160 (GPVQLTQTST) are compositionally biased toward polar residues.

It belongs to the CEP43 family. As to quaternary structure, homooligomer; probably required for localization to centrosomes.

It is found in the cell projection. The protein localises to the cilium. The protein resides in the cytoplasm. It localises to the cytoskeleton. Its subcellular location is the cilium basal body. It is found in the microtubule organizing center. The protein localises to the centrosome. The protein resides in the cytoplasmic granule. It localises to the centriolar satellite. In terms of biological role, involved in the biogenesis of cilia. Required for the recruitment of PLK1 to centrosomes and S phase progression. The chain is Centrosomal protein 20 (Cep20) from Xenopus laevis (African clawed frog).